The sequence spans 249 residues: AA9 family lytic polysaccharide monooxygenase A (249 aa).

Residues methionine 1 to glycine 21 form the signal peptide. Histidine 22 is a binding site for Cu(2+). The residue at position 22 (histidine 22) is a Methylhistidine. Asparagine 34 and asparagine 80 each carry an N-linked (GlcNAc...) asparagine glycan. Disulfide bonds link cysteine 77–cysteine 199 and cysteine 118–cysteine 122. Residue histidine 107 participates in Cu(2+) binding. O2 is bound by residues histidine 185 and glutamine 194. Tyrosine 196 contacts Cu(2+).

The protein belongs to the polysaccharide monooxygenase AA9 family. It depends on Cu(2+) as a cofactor. In terms of processing, the catalytically essential N-terminal histidine His-22 is post-translationally modified by methylation to prevent protonation of the histidine side chain, and protect the critical active site of the enzyme from oxidative damage.

It localises to the secreted. The catalysed reaction is [(1-&gt;4)-beta-D-glucosyl]n+m + reduced acceptor + O2 = 4-dehydro-beta-D-glucosyl-[(1-&gt;4)-beta-D-glucosyl]n-1 + [(1-&gt;4)-beta-D-glucosyl]m + acceptor + H2O.. In terms of biological role, lytic polysaccharide monooxygenase (LPMO) that exhibits a mixed C1/C4 oxidative cleavage activity on cellulose and xyloglucan. Catalysis by LPMOs requires the reduction of the active-site copper from Cu(II) to Cu(I) by a reducing agent and H(2)O(2) or O(2) as a cosubstrate. Shows a higher boosting effect with cellulases on the enzymatic saccharification of complex lignocellulosic substrates associated with xyloglucan than on the lignocellulosic substrates without xyloglucan. The oxidative cleavage of xyloglucan by LPMO9A may facilitate to open up the sterical hindrance of cellulose by xyloglucan and thereby increase accessibility for cellulase to lignocellulosic substrates. The polypeptide is AA9 family lytic polysaccharide monooxygenase A (Penicillium parvum (Eupenicillium parvum)).